The following is a 186-amino-acid chain: Lipid A acyltransferase PagP (186 aa).

Residues 1-19 (MKRLISCLTIICALNRSAA) form the signal peptide. Catalysis depends on residues His60, Asp103, and Ser104.

The protein belongs to the lipid A palmitoyltransferase family. Homodimer.

Its subcellular location is the cell outer membrane. The enzyme catalyses a lipid A + a 1,2-diacyl-sn-glycero-3-phosphocholine = a hepta-acyl lipid A + a 2-acyl-sn-glycero-3-phosphocholine. It carries out the reaction a lipid IVA + a 1,2-diacyl-sn-glycero-3-phosphocholine = a lipid IVB + a 2-acyl-sn-glycero-3-phosphocholine. The catalysed reaction is a lipid IIA + a 1,2-diacyl-sn-glycero-3-phosphocholine = a lipid IIB + a 2-acyl-sn-glycero-3-phosphocholine. Its function is as follows. Transfers a fatty acid residue from the sn-1 position of a phospholipid to the N-linked hydroxyfatty acid chain on the proximal unit of lipid A or its precursors. Confers resistance to cationic antimicrobial peptides (CAMPs). Promotes the ability of L.pneumophila to replicate and/or survive in macrophages. Important for ability to kill macrophages and to promote the virulence. This chain is Lipid A acyltransferase PagP, found in Legionella pneumophila.